A 343-amino-acid chain; its full sequence is Tetraacyldisaccharide 4'-kinase (343 aa).

58–65 is an ATP binding site; it reads VAGGAGKT.

It belongs to the LpxK family.

It catalyses the reaction a lipid A disaccharide + ATP = a lipid IVA + ADP + H(+). The protein operates within glycolipid biosynthesis; lipid IV(A) biosynthesis; lipid IV(A) from (3R)-3-hydroxytetradecanoyl-[acyl-carrier-protein] and UDP-N-acetyl-alpha-D-glucosamine: step 6/6. Transfers the gamma-phosphate of ATP to the 4'-position of a tetraacyldisaccharide 1-phosphate intermediate (termed DS-1-P) to form tetraacyldisaccharide 1,4'-bis-phosphate (lipid IVA). The protein is Tetraacyldisaccharide 4'-kinase of Polaromonas naphthalenivorans (strain CJ2).